The chain runs to 290 residues: Eukaryotic translation initiation factor 3 subunit G (290 aa).

The segment covering 1–12 has biased composition (basic and acidic residues); it reads MADSKQSNRDWA. Disordered regions lie at residues 1–30 and 173–192; these read MADS…STDA and AGET…ATGA. An RRM domain is found at 204–285; sequence PTLRVTSLSI…LILEVAWSQP (82 aa).

The protein belongs to the eIF-3 subunit G family. In terms of assembly, component of the eukaryotic translation initiation factor 3 (eIF-3) complex.

Its subcellular location is the cytoplasm. In terms of biological role, RNA-binding component of the eukaryotic translation initiation factor 3 (eIF-3) complex, which is involved in protein synthesis of a specialized repertoire of mRNAs and, together with other initiation factors, stimulates binding of mRNA and methionyl-tRNAi to the 40S ribosome. The eIF-3 complex specifically targets and initiates translation of a subset of mRNAs involved in cell proliferation. This subunit can bind 18S rRNA. This Cryptococcus neoformans var. neoformans serotype D (strain B-3501A) (Filobasidiella neoformans) protein is Eukaryotic translation initiation factor 3 subunit G.